A 258-amino-acid polypeptide reads, in one-letter code: L-rhamnose-1-dehydrogenase (258 aa).

Residues Ile19, Asp68, and Asn95 each coordinate NADP(+). Residues Ser147 and Tyr161 each act as proton donor in the active site. 4 residues coordinate NADP(+): Tyr161, Lys165, Ile194, and Thr196. Catalysis depends on Lys165, which acts as the Lowers pKa of active site Tyr.

This sequence belongs to the short-chain dehydrogenases/reductases (SDR) family.

It catalyses the reaction L-rhamnofuranose + NAD(+) = L-rhamnono-1,4-lactone + NADH + H(+). In terms of biological role, NAD-dependent dehydrogenase that has high activity with L-rhamnose and L-lyxose, and shows only low activity with L-mannose. Has no activity with NADP. Catalyzes the first step in an alternative pathway for rhamnose utilization that does not involve phosphorylated intermediates. This Scheffersomyces stipitis (strain ATCC 58785 / CBS 6054 / NBRC 10063 / NRRL Y-11545) (Yeast) protein is L-rhamnose-1-dehydrogenase (DHG2).